A 295-amino-acid polypeptide reads, in one-letter code: 33 kDa chaperonin (295 aa).

2 disulfides stabilise this stretch: C238-C240 and C271-C274.

This sequence belongs to the HSP33 family. In terms of processing, under oxidizing conditions two disulfide bonds are formed involving the reactive cysteines. Under reducing conditions zinc is bound to the reactive cysteines and the protein is inactive.

Its subcellular location is the cytoplasm. Redox regulated molecular chaperone. Protects both thermally unfolding and oxidatively damaged proteins from irreversible aggregation. Plays an important role in the bacterial defense system toward oxidative stress. This is 33 kDa chaperonin from Clostridium botulinum (strain Eklund 17B / Type B).